A 204-amino-acid chain; its full sequence is Outer-membrane lipoprotein LolB (204 aa).

The first 20 residues, 1–20 (MLRSRRLALLCLATPLWLAA), serve as a signal peptide directing secretion. Residue C21 is the site of N-palmitoyl cysteine attachment. C21 carries the S-diacylglycerol cysteine lipid modification. The tract at residues 131–150 (GRAAPGTPSNVTRDANGRPD) is disordered.

The protein belongs to the LolB family. In terms of assembly, monomer.

It localises to the cell outer membrane. Plays a critical role in the incorporation of lipoproteins in the outer membrane after they are released by the LolA protein. In Cupriavidus metallidurans (strain ATCC 43123 / DSM 2839 / NBRC 102507 / CH34) (Ralstonia metallidurans), this protein is Outer-membrane lipoprotein LolB.